The chain runs to 410 residues: Peptidase T (410 aa).

Histidine 79 is a Zn(2+) binding site. Residue aspartate 81 is part of the active site. Residue aspartate 142 coordinates Zn(2+). The active-site Proton acceptor is glutamate 176. Zn(2+) is bound by residues glutamate 177, aspartate 199, and histidine 381.

This sequence belongs to the peptidase M20B family. Zn(2+) serves as cofactor.

Its subcellular location is the cytoplasm. The enzyme catalyses Release of the N-terminal residue from a tripeptide.. In terms of biological role, cleaves the N-terminal amino acid of tripeptides. This Bacillus subtilis (strain 168) protein is Peptidase T (pepT).